We begin with the raw amino-acid sequence, 782 residues long: E3 UFM1-protein ligase 1 homolog (782 aa).

The interval 404 to 478 (NVSTQELEDE…SRGGGGASKK (75 aa)) is disordered.

Belongs to the UFL1 family.

E3 UFM1-protein ligase that mediates ufmylation of target proteins. In Drosophila melanogaster (Fruit fly), this protein is E3 UFM1-protein ligase 1 homolog.